The following is a 727-amino-acid chain: Platelet endothelial cell adhesion molecule (727 aa).

The first 17 residues, 1–17, serve as a signal peptide directing secretion; the sequence is MLLALGLTLVLYASLQA. The Extracellular segment spans residues 18-590; the sequence is EENSFTINSI…VRVFLAPWKK (573 aa). Ig-like C2-type domains are found at residues 40–126, 135–213, 225–309, 315–391, 413–472, and 488–578; these read GQQL…PKVT, GGVV…PIRS, PKFE…IMVN, PKPK…LVPI, GHAI…NCHS, and PVDE…RSST. The cysteines at positions 47 and 99 are disulfide-linked. Asn74 and Asn141 each carry an N-linked (GlcNAc...) asparagine glycan. Cystine bridges form between Cys142–Cys195 and Cys245–Cys293. N-linked (GlcNAc...) asparagine glycans are attached at residues Asn309, Asn345, Asn360, Asn424, and Asn540. 3 disulfides stabilise this stretch: Cys336–Cys375, Cys420–Cys465, and Cys512–Cys561. Residues 591-609 form a helical membrane-spanning segment; that stretch reads GLIAVVVIGVVIATLIVAA. Topologically, residues 610-727 are cytoplasmic; it reads KCYFLRKAKA…SRTEGSLNGT (118 aa). Cys611 is lipidated: S-palmitoyl cysteine. A disordered region spans residues 642–672; the sequence is SEPSVEANSHYGYDDVSGNDAVKPINQNKDP. 2 consecutive short sequence motifs (ITIM motif) follow at residues 677-682 and 700-705; these read VEYTEV and TVYSEI. Tyr679 and Tyr702 each carry phosphotyrosine; by FER. Residues 698–718 form a membrane-bound segment which detaches upon phosphorylation region; it reads TETVYSEIRKVDPNLMENRYS. Positions 710 to 727 are may play a role in cytoprotective signaling; that stretch reads PNLMENRYSRTEGSLNGT. Residues Ser718 and Ser723 each carry the phosphoserine modification.

As to quaternary structure, trans-homodimer (via Ig-like C2-type 1 and Ig-like C2-type 2 domains); trans-homodimerization is required for cell-cell interaction. Forms a complex with BDKRB2 and GNAQ. Interacts with BDKRB2 and GNAQ. Interacts with PTPN11; Tyr-702 is critical for PTPN11 recruitment. Interacts with FER. Interacts with CD177; the interaction is Ca(2+)-dependent; the interaction is direct. Post-translationally, phosphorylated on Ser and Tyr residues by src kinases after cellular activation. Upon activation, phosphorylated on Ser-718 which probably initiates the dissociation of the membrane-interaction segment (residues 698-718) from the cell membrane allowing the sequential phosphorylation of Tyr-702 and Tyr-679. Constitutively phosphorylated on Ser-723 in resting platelets. Phosphorylated on tyrosine residues by FER and FES in response to FCER1 activation. In endothelial cells Fyn mediates mechanical-force (stretch or pull) induced tyrosine phosphorylation. Palmitoylation by ZDHHC21 is necessary for cell surface expression in endothelial cells and enrichment in membrane rafts. In terms of tissue distribution, expressed in lung and platelets (at protein level).

It localises to the cell membrane. Its subcellular location is the membrane raft. It is found in the cell junction. Cell adhesion molecule which is required for leukocyte transendothelial migration (TEM) under most inflammatory conditions. Tyr-679 plays a critical role in TEM and is required for efficient trafficking of PECAM1 to and from the lateral border recycling compartment (LBRC) and is also essential for the LBRC membrane to be targeted around migrating leukocytes. Trans-homophilic interaction may play a role in endothelial cell-cell adhesion via cell junctions. Heterophilic interaction with CD177 plays a role in transendothelial migration of neutrophils. Homophilic ligation of PECAM1 prevents macrophage-mediated phagocytosis of neighboring viable leukocytes by transmitting a detachment signal. Promotes macrophage-mediated phagocytosis of apoptotic leukocytes by tethering them to the phagocytic cells; PECAM1-mediated detachment signal appears to be disabled in apoptotic leukocytes. Modulates bradykinin receptor BDKRB2 activation. Regulates bradykinin- and hyperosmotic shock-induced ERK1/2 activation in endothelial cells. Induces susceptibility to atherosclerosis. The chain is Platelet endothelial cell adhesion molecule (Pecam1) from Mus musculus (Mouse).